The sequence spans 177 residues: Adenine phosphoribosyltransferase (177 aa).

Belongs to the purine/pyrimidine phosphoribosyltransferase family. Homodimer.

The protein localises to the cytoplasm. The enzyme catalyses AMP + diphosphate = 5-phospho-alpha-D-ribose 1-diphosphate + adenine. Its pathway is purine metabolism; AMP biosynthesis via salvage pathway; AMP from adenine: step 1/1. Functionally, catalyzes a salvage reaction resulting in the formation of AMP, that is energically less costly than de novo synthesis. The sequence is that of Adenine phosphoribosyltransferase from Chlorobaculum tepidum (strain ATCC 49652 / DSM 12025 / NBRC 103806 / TLS) (Chlorobium tepidum).